Reading from the N-terminus, the 266-residue chain is Glucosamine-6-phosphate deaminase (266 aa).

The active-site Proton acceptor; for enolization step is the Asp72. The active-site For ring-opening step is Asp141. Residue His143 is the Proton acceptor; for ring-opening step of the active site. Glu148 (for ring-opening step) is an active-site residue.

Belongs to the glucosamine/galactosamine-6-phosphate isomerase family. NagB subfamily. Homohexamer.

It carries out the reaction alpha-D-glucosamine 6-phosphate + H2O = beta-D-fructose 6-phosphate + NH4(+). It participates in amino-sugar metabolism; N-acetylneuraminate degradation; D-fructose 6-phosphate from N-acetylneuraminate: step 5/5. Its activity is regulated as follows. Allosterically activated by N-acetylglucosamine 6-phosphate (GlcNAc6P). In terms of biological role, catalyzes the reversible isomerization-deamination of glucosamine 6-phosphate (GlcN6P) to form fructose 6-phosphate (Fru6P) and ammonium ion. The chain is Glucosamine-6-phosphate deaminase from Vibrio cholerae serotype O1 (strain ATCC 39541 / Classical Ogawa 395 / O395).